A 148-amino-acid polypeptide reads, in one-letter code: 3-dehydroquinate dehydratase (148 aa).

Y24 acts as the Proton acceptor in catalysis. Positions 80, 86, and 93 each coordinate substrate. H106 functions as the Proton donor in the catalytic mechanism. Substrate contacts are provided by residues 107–108 and R117; that span reads IS.

The protein belongs to the type-II 3-dehydroquinase family. As to quaternary structure, homododecamer.

It carries out the reaction 3-dehydroquinate = 3-dehydroshikimate + H2O. It participates in metabolic intermediate biosynthesis; chorismate biosynthesis; chorismate from D-erythrose 4-phosphate and phosphoenolpyruvate: step 3/7. In terms of biological role, catalyzes a trans-dehydration via an enolate intermediate. The sequence is that of 3-dehydroquinate dehydratase from Acidovorax ebreus (strain TPSY) (Diaphorobacter sp. (strain TPSY)).